Reading from the N-terminus, the 177-residue chain is ATP synthase subunit delta (177 aa).

This sequence belongs to the ATPase delta chain family. F-type ATPases have 2 components, F(1) - the catalytic core - and F(0) - the membrane proton channel. F(1) has five subunits: alpha(3), beta(3), gamma(1), delta(1), epsilon(1). F(0) has three main subunits: a(1), b(2) and c(10-14). The alpha and beta chains form an alternating ring which encloses part of the gamma chain. F(1) is attached to F(0) by a central stalk formed by the gamma and epsilon chains, while a peripheral stalk is formed by the delta and b chains.

The protein resides in the cell inner membrane. In terms of biological role, f(1)F(0) ATP synthase produces ATP from ADP in the presence of a proton or sodium gradient. F-type ATPases consist of two structural domains, F(1) containing the extramembraneous catalytic core and F(0) containing the membrane proton channel, linked together by a central stalk and a peripheral stalk. During catalysis, ATP synthesis in the catalytic domain of F(1) is coupled via a rotary mechanism of the central stalk subunits to proton translocation. Functionally, this protein is part of the stalk that links CF(0) to CF(1). It either transmits conformational changes from CF(0) to CF(1) or is implicated in proton conduction. The protein is ATP synthase subunit delta of Tolumonas auensis (strain DSM 9187 / NBRC 110442 / TA 4).